The primary structure comprises 815 residues: Lon protease 1 (815 aa).

Residues 19-212 enclose the Lon N-terminal domain; it reads MPLLPLRDIV…KLFGQIRSEI (194 aa). ATP is bound at residue 364–371; it reads GPPGVGKT. The Lon proteolytic domain maps to 601-782; sequence KDEIGLAVGL…DDVLRKAMVV (182 aa). Active-site residues include Ser688 and Lys731. Residues 793-815 are disordered; it reads EAGAQQAVMFEQKPPAADEIRAH.

It belongs to the peptidase S16 family. In terms of assembly, homohexamer. Organized in a ring with a central cavity.

It localises to the cytoplasm. The enzyme catalyses Hydrolysis of proteins in presence of ATP.. In terms of biological role, ATP-dependent serine protease that mediates the selective degradation of mutant and abnormal proteins as well as certain short-lived regulatory proteins. Required for cellular homeostasis and for survival from DNA damage and developmental changes induced by stress. Degrades polypeptides processively to yield small peptide fragments that are 5 to 10 amino acids long. Binds to DNA in a double-stranded, site-specific manner. In Syntrophobacter fumaroxidans (strain DSM 10017 / MPOB), this protein is Lon protease 1.